Reading from the N-terminus, the 430-residue chain is Adenylosuccinate synthetase (430 aa).

GTP is bound by residues 12 to 18 and 40 to 42; these read GDEGKGK and GHT. D13 acts as the Proton acceptor in catalysis. Positions 13 and 40 each coordinate Mg(2+). IMP-binding positions include 13-16, 38-41, T128, R142, Q223, T238, and R302; these read DEGK and NAGH. H41 (proton donor) is an active-site residue. Residues 330–332 and 412–414 each bind GTP; these read SID and SVG.

This sequence belongs to the adenylosuccinate synthetase family. As to quaternary structure, homodimer. Requires Mg(2+) as cofactor.

Its subcellular location is the cytoplasm. It carries out the reaction IMP + L-aspartate + GTP = N(6)-(1,2-dicarboxyethyl)-AMP + GDP + phosphate + 2 H(+). It participates in purine metabolism; AMP biosynthesis via de novo pathway; AMP from IMP: step 1/2. Its function is as follows. Plays an important role in the de novo pathway of purine nucleotide biosynthesis. Catalyzes the first committed step in the biosynthesis of AMP from IMP. The polypeptide is Adenylosuccinate synthetase (Bacillus subtilis (strain 168)).